Consider the following 305-residue polypeptide: Methionyl-tRNA formyltransferase (305 aa).

109–112 (SLLP) provides a ligand contact to (6S)-5,6,7,8-tetrahydrofolate.

The protein belongs to the Fmt family.

The enzyme catalyses L-methionyl-tRNA(fMet) + (6R)-10-formyltetrahydrofolate = N-formyl-L-methionyl-tRNA(fMet) + (6S)-5,6,7,8-tetrahydrofolate + H(+). Functionally, attaches a formyl group to the free amino group of methionyl-tRNA(fMet). The formyl group appears to play a dual role in the initiator identity of N-formylmethionyl-tRNA by promoting its recognition by IF2 and preventing the misappropriation of this tRNA by the elongation apparatus. The sequence is that of Methionyl-tRNA formyltransferase from Roseobacter denitrificans (strain ATCC 33942 / OCh 114) (Erythrobacter sp. (strain OCh 114)).